A 46-amino-acid chain; its full sequence is Photosystem II reaction center protein K (46 aa).

The propeptide occupies 1–9; it reads MSTLPILLA. A helical transmembrane segment spans residues 25-45; that stretch reads LPSIPVLFLLLAFVWQAAVSF.

It belongs to the PsbK family. In terms of assembly, PSII is composed of 1 copy each of membrane proteins PsbA, PsbB, PsbC, PsbD, PsbE, PsbF, PsbH, PsbI, PsbJ, PsbK, PsbL, PsbM, PsbT, PsbX, PsbY, PsbZ, Psb30/Ycf12, at least 3 peripheral proteins of the oxygen-evolving complex and a large number of cofactors. It forms dimeric complexes.

It localises to the plastid. It is found in the chloroplast thylakoid membrane. One of the components of the core complex of photosystem II (PSII). PSII is a light-driven water:plastoquinone oxidoreductase that uses light energy to abstract electrons from H(2)O, generating O(2) and a proton gradient subsequently used for ATP formation. It consists of a core antenna complex that captures photons, and an electron transfer chain that converts photonic excitation into a charge separation. This is Photosystem II reaction center protein K from Nephroselmis olivacea (Green alga).